The sequence spans 255 residues: Small ribosomal subunit protein uS2 (255 aa).

The tract at residues 230–255 (QSSSGRDLGASSEVPVEPALEEAAEG) is disordered.

The protein belongs to the universal ribosomal protein uS2 family.

This chain is Small ribosomal subunit protein uS2, found in Rhizobium etli (strain CIAT 652).